A 355-amino-acid polypeptide reads, in one-letter code: MRVADFSFELPESLIAHYPQAERSGCRLLSLDGPTGDLTHGVFTDLLEKLNPGDLLVFNNTRVIPARLFGRKVSGGKLEVLVERVLDDHRILAHVRASKAPKPGTELLLGDDESVKATMVARHDALFELHFDDSRDVLSILNDIGHMPLPPYIDRPDEDADRELYQTVYSQRPGAVAAPTAGLHFDEPMLAALRAKGIEMAFVTLHVGAGTFQPVRVDTIEDHIMHAEYAEVPQDVVDAVLACKARGNRVIAVGTTSVRSLESAAQASQDAPIAPFFGDTKIFIYPGYHYRIIDALVTNFHLPESTLIMLVSAFAGYQNTMSAYREAVAEQYRFFSYGDAMFITHSPMAEQEKVG.

It belongs to the QueA family. As to quaternary structure, monomer.

It is found in the cytoplasm. It carries out the reaction 7-aminomethyl-7-carbaguanosine(34) in tRNA + S-adenosyl-L-methionine = epoxyqueuosine(34) in tRNA + adenine + L-methionine + 2 H(+). Its pathway is tRNA modification; tRNA-queuosine biosynthesis. Functionally, transfers and isomerizes the ribose moiety from AdoMet to the 7-aminomethyl group of 7-deazaguanine (preQ1-tRNA) to give epoxyqueuosine (oQ-tRNA). The chain is S-adenosylmethionine:tRNA ribosyltransferase-isomerase from Pectobacterium atrosepticum (strain SCRI 1043 / ATCC BAA-672) (Erwinia carotovora subsp. atroseptica).